Consider the following 1029-residue polypeptide: Chitin synthase 3 (1029 aa).

The segment at 1–29 is disordered; it reads MAYYSRPASAGAARAQDDQDPYPYYPDPD. N37 carries N-linked (GlcNAc...) asparagine glycosylation. The span at 46–71 shows a compositional bias: low complexity; that stretch reads ASGAASSASHTSPFSDAHAASASPAS. Disordered stretches follow at residues 46 to 105 and 168 to 209; these read ASGA…SRMP and LAHR…AGTS. Over residues 76 to 91 the composition is skewed to polar residues; sequence SHQQVSAHAPQQQHMS. Residues 191–202 show a composition bias toward basic and acidic residues; it reads AHDEKYAYDRPD. N-linked (GlcNAc...) asparagine glycosylation is found at N401, N514, N527, and N689. 7 helical membrane-spanning segments follow: residues 723–743, 760–780, 796–816, 830–850, 860–880, 963–983, and 998–1018; these read FYSFVNMCFAWFGLANYYIFF, IGVFNVFMQYIYLGTVVSSFI, AAVVVFALLTVYMMVAAVLCL, AQMVVSLLATYGVYLISSLLA, FLQYLLLAPTYINILNIYAFC, VVLAWALSNGVLAAFILNGDA, and VYMVLVLIFVAGMACIRFIGS.

It belongs to the chitin synthase family. Class I subfamily.

Its subcellular location is the cell membrane. It is found in the cytoplasmic vesicle membrane. The catalysed reaction is [(1-&gt;4)-N-acetyl-beta-D-glucosaminyl](n) + UDP-N-acetyl-alpha-D-glucosamine = [(1-&gt;4)-N-acetyl-beta-D-glucosaminyl](n+1) + UDP + H(+). Its function is as follows. Polymerizes chitin, a structural polymer of the cell wall and septum, by transferring the sugar moiety of UDP-GlcNAc to the non-reducing end of the growing chitin polymer. The protein is Chitin synthase 3 of Mycosarcoma maydis (Corn smut fungus).